Here is a 490-residue protein sequence, read N- to C-terminus: Probable glycine dehydrogenase (decarboxylating) subunit 2 (490 aa).

Lysine 273 carries the N6-(pyridoxal phosphate)lysine modification.

It belongs to the GcvP family. C-terminal subunit subfamily. The glycine cleavage system is composed of four proteins: P, T, L and H. In this organism, the P 'protein' is a heterodimer of two subunits. The cofactor is pyridoxal 5'-phosphate.

It carries out the reaction N(6)-[(R)-lipoyl]-L-lysyl-[glycine-cleavage complex H protein] + glycine + H(+) = N(6)-[(R)-S(8)-aminomethyldihydrolipoyl]-L-lysyl-[glycine-cleavage complex H protein] + CO2. In terms of biological role, the glycine cleavage system catalyzes the degradation of glycine. The P protein binds the alpha-amino group of glycine through its pyridoxal phosphate cofactor; CO(2) is released and the remaining methylamine moiety is then transferred to the lipoamide cofactor of the H protein. The polypeptide is Probable glycine dehydrogenase (decarboxylating) subunit 2 (Staphylococcus aureus (strain bovine RF122 / ET3-1)).